Reading from the N-terminus, the 179-residue chain is Inner membrane-spanning protein YciB (179 aa).

Transmembrane regions (helical) follow at residues 11–31 (ILFFAVYKLQGIQAAAITLII), 52–69 (LIMGSAVVFFGSLSAYFN), 71–91 (LEFLKWKVTVVYALFSLILLV), 121–141 (LGWAVFFLLCMLINLYISQYL), and 149–169 (FKTFGILGMTLIATLVTGVYI).

Belongs to the YciB family.

The protein localises to the cell inner membrane. In terms of biological role, plays a role in cell envelope biogenesis, maintenance of cell envelope integrity and membrane homeostasis. This Histophilus somni (strain 129Pt) (Haemophilus somnus) protein is Inner membrane-spanning protein YciB.